The following is a 432-amino-acid chain: MPISKGIFLSLLSTLPLALAGHRSHRCVVPSSNGTRDDSPAIAKVFAQCATDSIIVFQEGVDYNVFQPIKAENLSNVEIRMHGNLHLPQNISAVQEIVKAGNSYWFTLEGPRVDWTGSEDINHGWINSYGQAWWDANPPNGTGIENRPHLLSYTTSDATIKYMRSRKPIAHNCRLHGDDITVTHAIVDAYSTGGFPFNTDGFDVAGTNIRISDSVMYNGDDAIAVGSGSHDIVFERNTIGYQSHGMSIGSLGKDPTDFANITNLRFEDVTVIDALYAARFKSWTGGQGLVKNVTWKNIRVFNVTFPIFVTQSYWDQGANRGDVDESSSVMMEDFTWSDFTGSINTYQPGDGSCASDPCWYNAGLPNLQHTEAIILECNTATSCKNFVTENIQLYPQSMDAPHLICMNATAELNPRLGFDCRNGMYTALSERH.

A signal peptide spans 1–20 (MPISKGIFLSLLSTLPLALA). Asparagine 33, asparagine 73, asparagine 90, and asparagine 140 each carry an N-linked (GlcNAc...) asparagine glycan. PbH1 repeat units follow at residues 206–227 (GTNIRISDSVMYNGDDAIAVGS) and 229–250 (SHDIVFERNTIGYQSHGMSIGS). The Proton donor role is filled by aspartate 220. The active site involves histidine 244. Residue asparagine 260 is glycosylated (N-linked (GlcNAc...) asparagine). One copy of the PbH1 3 repeat lies at 261-282 (ITNLRFEDVTVIDALYAARFKS). N-linked (GlcNAc...) asparagine glycans are attached at residues asparagine 292 and asparagine 302. The cysteines at positions 377 and 383 are disulfide-linked. Asparagine 407 is a glycosylation site (N-linked (GlcNAc...) asparagine).

It belongs to the glycosyl hydrolase 28 family.

It localises to the secreted. It catalyses the reaction [(1-&gt;4)-alpha-D-galacturonosyl](n) + H2O = alpha-D-galacturonate + [(1-&gt;4)-alpha-D-galacturonosyl](n-1). Its function is as follows. Specific in hydrolyzing the terminal glycosidic bond of polygalacturonic acid and oligogalacturonates. The polypeptide is Probable exopolygalacturonase C (pgxC) (Aspergillus terreus (strain NIH 2624 / FGSC A1156)).